The chain runs to 198 residues: Probable GTP-binding protein EngB (198 aa).

Residues Asp-22 to Thr-195 enclose the EngB-type G domain. Residues Gly-30–Ser-37, Gly-57–Thr-61, Asp-75–Gly-78, Thr-142–Asp-145, and Phe-174–Ser-176 contribute to the GTP site. Mg(2+) is bound by residues Ser-37 and Thr-59.

This sequence belongs to the TRAFAC class TrmE-Era-EngA-EngB-Septin-like GTPase superfamily. EngB GTPase family. Requires Mg(2+) as cofactor.

Functionally, necessary for normal cell division and for the maintenance of normal septation. The sequence is that of Probable GTP-binding protein EngB from Bacillus mycoides (strain KBAB4) (Bacillus weihenstephanensis).